Reading from the N-terminus, the 375-residue chain is B3 domain-containing protein REM-like 2 (375 aa).

3 consecutive DNA-binding regions (TF-B3) follow at residues 51–147 (SFVA…KRLY), 131–226 (FVTV…YGTN), and 277–375 (RLVI…KSGK).

The protein resides in the nucleus. In Arabidopsis thaliana (Mouse-ear cress), this protein is B3 domain-containing protein REM-like 2.